We begin with the raw amino-acid sequence, 337 residues long: tRNA N6-adenosine threonylcarbamoyltransferase (337 aa).

Residues His-111 and His-115 each contribute to the Fe cation site. Substrate-binding positions include 134-138 (LVSGG), Asp-167, Gly-180, and Asn-272. Asp-300 contacts Fe cation.

It belongs to the KAE1 / TsaD family. Requires Fe(2+) as cofactor.

Its subcellular location is the cytoplasm. It carries out the reaction L-threonylcarbamoyladenylate + adenosine(37) in tRNA = N(6)-L-threonylcarbamoyladenosine(37) in tRNA + AMP + H(+). In terms of biological role, required for the formation of a threonylcarbamoyl group on adenosine at position 37 (t(6)A37) in tRNAs that read codons beginning with adenine. Is involved in the transfer of the threonylcarbamoyl moiety of threonylcarbamoyl-AMP (TC-AMP) to the N6 group of A37, together with TsaE and TsaB. TsaD likely plays a direct catalytic role in this reaction. The chain is tRNA N6-adenosine threonylcarbamoyltransferase from Pseudoalteromonas translucida (strain TAC 125).